The following is a 281-amino-acid chain: Ribosomal protein L11 methyltransferase (281 aa).

S-adenosyl-L-methionine contacts are provided by T133, G154, D175, and N216.

This sequence belongs to the methyltransferase superfamily. PrmA family.

The protein localises to the cytoplasm. The catalysed reaction is L-lysyl-[protein] + 3 S-adenosyl-L-methionine = N(6),N(6),N(6)-trimethyl-L-lysyl-[protein] + 3 S-adenosyl-L-homocysteine + 3 H(+). In terms of biological role, methylates ribosomal protein L11. This Campylobacter jejuni subsp. jejuni serotype O:6 (strain 81116 / NCTC 11828) protein is Ribosomal protein L11 methyltransferase.